The following is a 105-amino-acid chain: Insulin (105 aa).

An N-terminal signal peptide occupies residues 1-24 (MALWTRLVPLLALLALWAPAPAHA). 3 disulfides stabilise this stretch: cysteine 31-cysteine 91, cysteine 43-cysteine 104, and cysteine 90-cysteine 95. Residues 57-82 (EVEGPQVGALELAGGPGAGGLEGPPQ) constitute a propeptide, c peptide.

The protein belongs to the insulin family. In terms of assembly, heterodimer of a B chain and an A chain linked by two disulfide bonds.

It localises to the secreted. In terms of biological role, insulin decreases blood glucose concentration. It increases cell permeability to monosaccharides, amino acids and fatty acids. It accelerates glycolysis, the pentose phosphate cycle, and glycogen synthesis in liver. This chain is Insulin (INS), found in Ovis aries (Sheep).